The chain runs to 345 residues: Viral Fc-gamma receptor-like protein UL119 (345 aa).

The N-terminal stretch at 1–23 is a signal peptide; the sequence is MCSVLAIALVVALLGDMHPGVKS. The tract at residues 23–43 is disordered; the sequence is SSTTSAVTSPSNTTVTSTTSI. Topologically, residues 24 to 293 are virion surface; that stretch reads STTSAVTSPS…IKSDPLFEDR (270 aa). Residues Asn-34, Asn-48, Asn-95, Asn-104, Asn-148, Asn-179, Asn-198, Asn-217, Asn-225, Asn-241, Asn-244, and Asn-260 are each glycosylated (N-linked (GlcNAc...) asparagine; by host). One can recognise an Ig-like V-type domain in the interval 91 to 190; the sequence is QVSLNATCKV…TWDLFTYPIY (100 aa). A helical transmembrane segment spans residues 294-314; the sequence is LLAYGVLAFLVFMVIILLYVT. Over 315–345 the chain is Intravirion; the sequence is YMLARRRDWSYKRLEEPVEEKKHPVPYFKQW.

Its subcellular location is the virion membrane. Serves as a receptor for the Fc part of human IgG. May thus be involved in interfering with host Ig-mediated immune responses. The sequence is that of Viral Fc-gamma receptor-like protein UL119 (UL119/UL118) from Homo sapiens (Human).